Here is a 124-residue protein sequence, read N- to C-terminus: Large ribosomal subunit protein bL19 (124 aa).

Belongs to the bacterial ribosomal protein bL19 family.

This protein is located at the 30S-50S ribosomal subunit interface and may play a role in the structure and function of the aminoacyl-tRNA binding site. The chain is Large ribosomal subunit protein bL19 from Acidiphilium cryptum (strain JF-5).